A 163-amino-acid polypeptide reads, in one-letter code: uncharacterized protein (163 aa).

The segment at 23–113 is disordered; that stretch reads DFPEEPPLWV…QVADGVHSQQ (91 aa). Position 102 is a phosphoserine (Ser-102).

This is an uncharacterized protein from Mus musculus (Mouse).